Consider the following 954-residue polypeptide: cGMP-specific 3',5'-cyclic phosphodiesterase alpha (954 aa).

Over 1–259 (MMDTKVDQTI…NTFYSSFPFK (259 aa)) the chain is Cytoplasmic. A helical transmembrane segment spans residues 260–280 (LFLHSLYMIFICFIYFVVLYF). The Extracellular portion of the chain corresponds to 281 to 296 (MLLKKIYTHPFIFHLS). A helical membrane pass occupies residues 297 to 317 (VLKFLFDIIFFLSFILYPLFL). Residues 318–327 (RLKRIDKIIY) are Cytoplasmic-facing. The helical transmembrane segment at 328-348 (SSYISSYIFVCVTFLYSFIIF) threads the bilayer. At 349-365 (KCSSYSVKMNSNTYQNN) the chain is on the extracellular side. A helical transmembrane segment spans residues 366–386 (FVFQNMLFLLINIIYICIFCF). Over 387–401 (LKNYMILYSFLYNCR) the chain is Cytoplasmic. A helical transmembrane segment spans residues 402 to 422 (FSIFCILFIFLYYYLFFSLDF). Topologically, residues 423–432 (YRIIHLPLDN) are extracellular. Residues 433 to 453 (FFFPFLCFLFFSFLFIFKIIM) traverse the membrane as a helical segment. Over 454-954 (SLYYEYVYEK…LSKLELIKFE (501 aa)) the chain is Cytoplasmic. The PDEase domain maps to 586–930 (NQEETKSFLS…ERWESHKNDN (345 aa)). The active-site Proton donor is histidine 680. Residue 680–684 (HTSLH) participates in 3',5'-cyclic GMP binding. Residues histidine 684, histidine 720, aspartate 721, and aspartate 832 each contribute to the Zn(2+) site. 3 residues coordinate 3',5'-cyclic GMP: aspartate 721, aspartate 832, and glutamine 884. Aspartate 721 contributes to the Mg(2+) binding site.

Belongs to the cyclic nucleotide phosphodiesterase family. Requires Zn(2+) as cofactor. The cofactor is Mg(2+).

It is found in the membrane. It catalyses the reaction 3',5'-cyclic GMP + H2O = GMP + H(+). Its pathway is purine metabolism; 3',5'-cyclic GMP degradation; GMP from 3',5'-cyclic GMP: step 1/1. Not inhibited by cAMP. Inhibited by zaprinast. Specifically hydrolyzes the second messenger cGMP, which is a key regulator of many important physiological processes. The polypeptide is cGMP-specific 3',5'-cyclic phosphodiesterase alpha (Plasmodium falciparum (isolate 3D7)).